A 137-amino-acid polypeptide reads, in one-letter code: ATP synthase epsilon chain, sodium ion specific (137 aa).

This sequence belongs to the ATPase epsilon chain family. In terms of assembly, F-type ATPases have 2 components, CF(1) - the catalytic core - and CF(0) - the membrane proton channel. CF(1) has five subunits: alpha(3), beta(3), gamma(1), delta(1), epsilon(1). CF(0) has three main subunits: a, b and c.

It localises to the cell inner membrane. Its function is as follows. Produces ATP from ADP in the presence of a sodium gradient across the membrane. The sequence is that of ATP synthase epsilon chain, sodium ion specific (atpC) from Propionigenium modestum.